Here is a 418-residue protein sequence, read N- to C-terminus: Serine hydroxymethyltransferase (418 aa).

(6S)-5,6,7,8-tetrahydrofolate is bound by residues L121 and 125–127 (GHL). K230 carries the post-translational modification N6-(pyridoxal phosphate)lysine. (6S)-5,6,7,8-tetrahydrofolate is bound by residues E246 and 355 to 357 (SPF).

The protein belongs to the SHMT family. As to quaternary structure, homodimer. Pyridoxal 5'-phosphate is required as a cofactor.

It localises to the cytoplasm. It catalyses the reaction (6R)-5,10-methylene-5,6,7,8-tetrahydrofolate + glycine + H2O = (6S)-5,6,7,8-tetrahydrofolate + L-serine. Its pathway is one-carbon metabolism; tetrahydrofolate interconversion. It functions in the pathway amino-acid biosynthesis; glycine biosynthesis; glycine from L-serine: step 1/1. Catalyzes the reversible interconversion of serine and glycine with tetrahydrofolate (THF) serving as the one-carbon carrier. This reaction serves as the major source of one-carbon groups required for the biosynthesis of purines, thymidylate, methionine, and other important biomolecules. Also exhibits THF-independent aldolase activity toward beta-hydroxyamino acids, producing glycine and aldehydes, via a retro-aldol mechanism. The polypeptide is Serine hydroxymethyltransferase (Streptococcus pneumoniae serotype 2 (strain D39 / NCTC 7466)).